The chain runs to 622 residues: 1-deoxy-D-xylulose-5-phosphate synthase (622 aa).

Thiamine diphosphate contacts are provided by residues His-80 and 121–123 (GHS). Mg(2+) is bound at residue Asp-152. Thiamine diphosphate-binding positions include 153-154 (GA), Asn-181, Tyr-288, and Glu-370. A Mg(2+)-binding site is contributed by Asn-181.

This sequence belongs to the transketolase family. DXPS subfamily. As to quaternary structure, homodimer. Requires Mg(2+) as cofactor. It depends on thiamine diphosphate as a cofactor.

It carries out the reaction D-glyceraldehyde 3-phosphate + pyruvate + H(+) = 1-deoxy-D-xylulose 5-phosphate + CO2. The protein operates within metabolic intermediate biosynthesis; 1-deoxy-D-xylulose 5-phosphate biosynthesis; 1-deoxy-D-xylulose 5-phosphate from D-glyceraldehyde 3-phosphate and pyruvate: step 1/1. In terms of biological role, catalyzes the acyloin condensation reaction between C atoms 2 and 3 of pyruvate and glyceraldehyde 3-phosphate to yield 1-deoxy-D-xylulose-5-phosphate (DXP). In Hamiltonella defensa subsp. Acyrthosiphon pisum (strain 5AT), this protein is 1-deoxy-D-xylulose-5-phosphate synthase.